We begin with the raw amino-acid sequence, 69 residues long: Photosystem I reaction center subunit IV (69 aa).

This sequence belongs to the PsaE family.

Its subcellular location is the cellular thylakoid membrane. In terms of biological role, stabilizes the interaction between PsaC and the PSI core, assists the docking of the ferredoxin to PSI and interacts with ferredoxin-NADP oxidoreductase. This is Photosystem I reaction center subunit IV from Prochlorococcus marinus (strain MIT 9215).